Reading from the N-terminus, the 259-residue chain is Small ribosomal subunit protein uS2 (259 aa).

The protein belongs to the universal ribosomal protein uS2 family.

The protein is Small ribosomal subunit protein uS2 of Streptococcus pneumoniae (strain Hungary19A-6).